Consider the following 125-residue polypeptide: Small ribosomal subunit protein eS8 (125 aa).

Residues 1–35 form a disordered region; it reads MQWQGRSVRKPSGGRYHTSQGKKRTEIGRAPAETH.

It belongs to the eukaryotic ribosomal protein eS8 family. In terms of assembly, part of the 30S ribosomal subunit.

This chain is Small ribosomal subunit protein eS8, found in Methanoculleus marisnigri (strain ATCC 35101 / DSM 1498 / JR1).